Reading from the N-terminus, the 211-residue chain is Ribosomal RNA small subunit methyltransferase G (211 aa).

Residues glycine 81, leucine 86, 132–133, and arginine 147 each bind S-adenosyl-L-methionine; that span reads AE.

The protein belongs to the methyltransferase superfamily. RNA methyltransferase RsmG family.

It is found in the cytoplasm. It catalyses the reaction guanosine(527) in 16S rRNA + S-adenosyl-L-methionine = N(7)-methylguanosine(527) in 16S rRNA + S-adenosyl-L-homocysteine. Functionally, specifically methylates the N7 position of guanine in position 527 of 16S rRNA. The protein is Ribosomal RNA small subunit methyltransferase G of Dichelobacter nodosus (strain VCS1703A).